Reading from the N-terminus, the 339-residue chain is Putative NADP-dependent oxidoreductase YfmJ (339 aa).

NADP(+) is bound by residues 156–159 (GAVG), lysine 182, tyrosine 198, asparagine 222, 244–250 (CGAISSY), 277–279 (FIV), and asparagine 327.

The protein belongs to the NADP-dependent oxidoreductase L4BD family.

Putative quinone oxidoreductase that may contribute to the degradation of aromatic compounds. The sequence is that of Putative NADP-dependent oxidoreductase YfmJ (yfmJ) from Bacillus subtilis (strain 168).